A 209-amino-acid polypeptide reads, in one-letter code: MSAPTKLILASASPRRVQLLQQAGLEPNRLVPAEIDETPLKAEHPRSLAKRLARSKAEKALERLRKDGEERDSFVLAADTVVAVGRRILPKTEIADEASNCLRLLSGRSHRVYTGICLFTPTGKLRHKLVETRVRFKRISREELEAYIASGEWRGKAGGYAIQGLAGSFVVKLVGSYTNVVGLPLHETVSLLAADGFKAYLNWPAGTQV.

Residue aspartate 79 is the Proton acceptor of the active site.

It belongs to the Maf family. YhdE subfamily. Requires a divalent metal cation as cofactor.

Its subcellular location is the cytoplasm. The catalysed reaction is dTTP + H2O = dTMP + diphosphate + H(+). It catalyses the reaction UTP + H2O = UMP + diphosphate + H(+). Its function is as follows. Nucleoside triphosphate pyrophosphatase that hydrolyzes dTTP and UTP. May have a dual role in cell division arrest and in preventing the incorporation of modified nucleotides into cellular nucleic acids. In Chelativorans sp. (strain BNC1), this protein is dTTP/UTP pyrophosphatase.